Reading from the N-terminus, the 504-residue chain is Maturase K (504 aa).

It belongs to the intron maturase 2 family. MatK subfamily.

The protein resides in the plastid. Its subcellular location is the chloroplast. In terms of biological role, usually encoded in the trnK tRNA gene intron. Probably assists in splicing its own and other chloroplast group II introns. The polypeptide is Maturase K (Bombax buonopozense (Red-flowered silk cotton tree)).